The following is a 191-amino-acid chain: uncharacterized protein (191 aa).

The N-terminal stretch at 1–22 (MKSLRLMLCAMPLMLTGCSTMS) is a signal peptide.

This is an uncharacterized protein from Escherichia coli (strain K12).